Reading from the N-terminus, the 463-residue chain is Endoglucanase (463 aa).

The first 27 residues, 1 to 27 (MVEKRKIFTVLCACGIGFTSYTSCISA), serve as a signal peptide directing secretion. A propeptide spanning residues 28 to 55 (AAIDNDTLINNGHKINSSIITNSSQVSA) is cleaved from the precursor. The active-site Proton donor is Glu-130. Asp-191 (nucleophile) is an active-site residue.

Belongs to the glycosyl hydrolase 8 (cellulase D) family. Post-translationally, the N- and the C-terminus may be subjected to proteolysis.

It carries out the reaction Endohydrolysis of (1-&gt;4)-beta-D-glucosidic linkages in cellulose, lichenin and cereal beta-D-glucans.. This Bacillus sp. (strain KSM-330) protein is Endoglucanase.